The following is a 617-amino-acid chain: Proline--tRNA ligase (617 aa).

This sequence belongs to the class-II aminoacyl-tRNA synthetase family. ProS type 1 subfamily. Homodimer.

Its subcellular location is the cytoplasm. It catalyses the reaction tRNA(Pro) + L-proline + ATP = L-prolyl-tRNA(Pro) + AMP + diphosphate. In terms of biological role, catalyzes the attachment of proline to tRNA(Pro) in a two-step reaction: proline is first activated by ATP to form Pro-AMP and then transferred to the acceptor end of tRNA(Pro). As ProRS can inadvertently accommodate and process non-cognate amino acids such as alanine and cysteine, to avoid such errors it has two additional distinct editing activities against alanine. One activity is designated as 'pretransfer' editing and involves the tRNA(Pro)-independent hydrolysis of activated Ala-AMP. The other activity is designated 'posttransfer' editing and involves deacylation of mischarged Ala-tRNA(Pro). The misacylated Cys-tRNA(Pro) is not edited by ProRS. This is Proline--tRNA ligase from Streptococcus agalactiae serotype Ia (strain ATCC 27591 / A909 / CDC SS700).